Consider the following 449-residue polypeptide: Uridine-cytidine kinase C (449 aa).

58 to 65 contributes to the ATP binding site; that stretch reads GPSGAGKT. Residues 235-401 form the CYTH domain; it reads NPIYILKSVK…QKSYIELYQD (167 aa).

Belongs to the uridine kinase family.

It carries out the reaction uridine + ATP = UMP + ADP + H(+). The catalysed reaction is cytidine + ATP = CMP + ADP + H(+). It participates in pyrimidine metabolism; CTP biosynthesis via salvage pathway; CTP from cytidine: step 1/3. It functions in the pathway pyrimidine metabolism; UMP biosynthesis via salvage pathway; UMP from uridine: step 1/1. In terms of biological role, catalyzes the conversion of uridine into uridine monophosphate and cytidine into cytidine monophosphate in the pyrimidine salvage pathway. This is Uridine-cytidine kinase C (udkC) from Dictyostelium discoideum (Social amoeba).